Reading from the N-terminus, the 687-residue chain is Triadin (687 aa).

At Met1–Pro47 the chain is on the cytoplasmic side. Residues Ala48–Phe68 traverse the membrane as a helical segment. The Lumenal segment spans residues Asp69 to Gln687. Over residues Asp117–Asp130 the composition is skewed to acidic residues. 3 disordered regions span residues Asp117–Asp265, Gly280–Pro643, and Phe660–Gln687. Positions Lys131–Asp265 are enriched in basic and acidic residues. A compositionally biased stretch (polar residues) spans Leu295–Ser306. Phosphoserine occurs at positions 303 and 306. Positions Leu307–Glu356 are enriched in basic and acidic residues. The span at Thr357–Ala370 shows a compositional bias: low complexity. 4 stretches are compositionally biased toward basic and acidic residues: residues Thr371–Pro390, Glu396–Ile431, Gly442–Pro459, and Leu466–Lys501. A glycan (N-linked (GlcNAc...) asparagine) is linked at Asn514. Basic and acidic residues-rich tracts occupy residues Thr539–Pro583 and Thr594–Val630. 2 stretches are compositionally biased toward polar residues: residues Thr631 to Pro643 and Val667 to Gln687.

Homooligomer of variable subunit number; disulfide-linked. Interacts with CASQ1 in skeletal muscle. Interacts with CASQ2. Interacts with RYR1 in skeletal muscle. Post-translationally, phosphorylated by CaMK2. In terms of processing, N-glycosylated. In terms of tissue distribution, detected in skeletal muscle (at protein level). Detected in skeletal muscle.

It is found in the sarcoplasmic reticulum membrane. It localises to the microsome. Its subcellular location is the cell membrane. The protein localises to the sarcolemma. Its function is as follows. Contributes to the regulation of lumenal Ca2+ release via the sarcoplasmic reticulum calcium release channels RYR1 and RYR2, a key step in triggering skeletal and heart muscle contraction. Required for normal organization of the triad junction, where T-tubules and the sarcoplasmic reticulum terminal cisternae are in close contact. Required for normal skeletal muscle strength. Plays a role in excitation-contraction coupling in the heart and in regulating the rate of heart beats. This Rattus norvegicus (Rat) protein is Triadin.